The following is a 300-amino-acid chain: Epimerase family protein MW0731 (300 aa).

The protein belongs to the NAD(P)-dependent epimerase/dehydratase family. SDR39U1 subfamily.

The protein is Epimerase family protein MW0731 of Staphylococcus aureus (strain MW2).